Reading from the N-terminus, the 98-residue chain is NADH-ubiquinone oxidoreductase chain 4L (98 aa).

3 helical membrane passes run 1-21 (MSMV…GLLM), 29-49 (SLLC…LTIL), and 61-81 (IILL…LVMV).

This sequence belongs to the complex I subunit 4L family. Core subunit of respiratory chain NADH dehydrogenase (Complex I) which is composed of 45 different subunits.

The protein localises to the mitochondrion inner membrane. It carries out the reaction a ubiquinone + NADH + 5 H(+)(in) = a ubiquinol + NAD(+) + 4 H(+)(out). Functionally, core subunit of the mitochondrial membrane respiratory chain NADH dehydrogenase (Complex I) which catalyzes electron transfer from NADH through the respiratory chain, using ubiquinone as an electron acceptor. Part of the enzyme membrane arm which is embedded in the lipid bilayer and involved in proton translocation. In Bos indicus (Zebu), this protein is NADH-ubiquinone oxidoreductase chain 4L (MT-ND4L).